The sequence spans 457 residues: Putative zinc finger CCCH domain-containing protein 21 (457 aa).

4 disordered regions span residues 51-73 (PTSS…ARAS), 102-130 (LESP…EKLL), 195-221 (TSPS…ERER), and 280-329 (RKQA…RLRV). Residues 57-66 (DGGGGGGGGY) show a composition bias toward gly residues. Residues 215–276 (ASAEREREVR…HLSLLLEELE (62 aa)) adopt a coiled-coil conformation. 2 C3H1-type zinc fingers span residues 382–409 (AAKT…HGLQ) and 419–447 (RYKT…HSPL).

This Oryza sativa subsp. japonica (Rice) protein is Putative zinc finger CCCH domain-containing protein 21.